A 253-amino-acid chain; its full sequence is ATP synthase subunit a (253 aa).

Transmembrane regions (helical) follow at residues 27-47 (ISFTNASGFMLLGVVLVIGFF), 87-107 (FFPFVFTLFFFILFANLIGMV), 117-137 (IIVTGALAMTVILMVIVVGLI), 146-166 (LFAPSGAPLPIYIILTPIEII), 196-216 (FTVMLIGAGAIYIPVAALAFA), and 224-244 (LEFLVAGLQAYVFAILTCVYL).

Belongs to the ATPase A chain family. In terms of assembly, F-type ATPases have 2 components, CF(1) - the catalytic core - and CF(0) - the membrane proton channel. CF(1) has five subunits: alpha(3), beta(3), gamma(1), delta(1), epsilon(1). CF(0) has three main subunits: a(1), b(2) and c(9-12). The alpha and beta chains form an alternating ring which encloses part of the gamma chain. CF(1) is attached to CF(0) by a central stalk formed by the gamma and epsilon chains, while a peripheral stalk is formed by the delta and b chains.

Its subcellular location is the cell inner membrane. In terms of biological role, key component of the proton channel; it plays a direct role in the translocation of protons across the membrane. The protein is ATP synthase subunit a of Hyphomonas neptunium (strain ATCC 15444).